A 402-amino-acid chain; its full sequence is Multidrug resistance protein MdtH (402 aa).

At 1–12 (MSRVSQARNLGK) the chain is on the cytoplasmic side. A helical membrane pass occupies residues 13–33 (YFLLIDNMLVVLGFFVVFPLI). The Periplasmic segment spans residues 34 to 98 (SIRFVDQMGW…GFATMGIAHE (65 aa)). The chain crosses the membrane as a helical span at residues 99 to 116 (PWLLWFSCFLSGLGGTLF). Residues 117–138 (DPPRSALVVKLIRPEQRGRFFS) lie on the Cytoplasmic side of the membrane. A helical transmembrane segment spans residues 139–159 (LLMMQDSAGAVIGALLGSWLL). Topologically, residues 160-164 (QYDFR) are periplasmic. The chain crosses the membrane as a helical span at residues 165-185 (LVCATGAILFILCALFNAWLL). The Cytoplasmic segment spans residues 186–213 (PAWKLSTVRTPVREGMRRVMSDKRFVTY). The chain crosses the membrane as a helical span at residues 214 to 234 (VLTLAGYYMLAVQVMLMLPIM). Topologically, residues 235 to 243 (VNDIAGSPA) are periplasmic. A helical membrane pass occupies residues 244 to 264 (AVKWMYAIEACLSLTLLYPIA). Over 265–276 (RWSEKRFRLEHR) the chain is Cytoplasmic. A helical transmembrane segment spans residues 277-297 (LMAGLLVMSLSMLPIGMVGNL). Topologically, residues 298–299 (QQ) are periplasmic. A helical membrane pass occupies residues 300 to 320 (LFTLICAFYIGSVIAEPARET). The Cytoplasmic portion of the chain corresponds to 321–339 (LSASLADARARGSYMGFSR). The helical transmembrane segment at 340–360 (LGLAIGGAIGYIGGGWLFDMG) threads the bilayer. Topologically, residues 361-367 (KALAQPE) are periplasmic. The chain crosses the membrane as a helical span at residues 368 to 388 (LPWMMLGIIGFITFLALGWQF). The Cytoplasmic segment spans residues 389-402 (SHKRTPRRMLEPGA).

Belongs to the major facilitator superfamily. DHA1 family. MdtH (TC 2.A.1.2.21) subfamily.

It localises to the cell inner membrane. The protein is Multidrug resistance protein MdtH of Salmonella agona (strain SL483).